The following is a 406-amino-acid chain: COP9 signalosome complex subunit 4 (406 aa).

Residues 197–366 enclose the PCI domain; sequence YRRKFIEAAQ…GIVHFETREP (170 aa).

It belongs to the CSN4 family. In terms of assembly, component of the CSN complex, probably composed of cops1, cops2, cops3, cops4, cops5, cops6, cops7, cops8 and cops9.

The protein resides in the cytoplasm. It is found in the nucleus. It localises to the cytoplasmic vesicle. The protein localises to the secretory vesicle. Its subcellular location is the synaptic vesicle. Its function is as follows. Component of the COP9 signalosome complex (CSN), a complex involved in various cellular and developmental processes. The CSN complex is an essential regulator of the ubiquitin (Ubl) conjugation pathway by mediating the deneddylation of the cullin subunits of E3 ligase complexes, leading to modify the Ubl ligase activity. In Danio rerio (Zebrafish), this protein is COP9 signalosome complex subunit 4 (cops4).